We begin with the raw amino-acid sequence, 388 residues long: Succinate--CoA ligase [ADP-forming] subunit beta (388 aa).

The ATP-grasp domain occupies 9-244; sequence KQLFARYGLP…HSQEDEREAH (236 aa). ATP is bound by residues lysine 46, 53–55, glutamate 99, threonine 102, and glutamate 107; that span reads GRG. Residues asparagine 199 and aspartate 213 each contribute to the Mg(2+) site. Residues asparagine 264 and 321-323 each bind substrate; that span reads GIV.

It belongs to the succinate/malate CoA ligase beta subunit family. As to quaternary structure, heterotetramer of two alpha and two beta subunits. Requires Mg(2+) as cofactor.

It catalyses the reaction succinate + ATP + CoA = succinyl-CoA + ADP + phosphate. The enzyme catalyses GTP + succinate + CoA = succinyl-CoA + GDP + phosphate. It functions in the pathway carbohydrate metabolism; tricarboxylic acid cycle; succinate from succinyl-CoA (ligase route): step 1/1. Functionally, succinyl-CoA synthetase functions in the citric acid cycle (TCA), coupling the hydrolysis of succinyl-CoA to the synthesis of either ATP or GTP and thus represents the only step of substrate-level phosphorylation in the TCA. The beta subunit provides nucleotide specificity of the enzyme and binds the substrate succinate, while the binding sites for coenzyme A and phosphate are found in the alpha subunit. The polypeptide is Succinate--CoA ligase [ADP-forming] subunit beta (Sodalis glossinidius (strain morsitans)).